The following is a 375-amino-acid chain: Queuine tRNA-ribosyltransferase (375 aa).

Asp90 serves as the catalytic Proton acceptor. Substrate-binding positions include 90 to 94 (DSGGF), Asp144, Gln190, and Gly217. An RNA binding region spans residues 248 to 254 (GIGTPHY). Residue Asp267 is the Nucleophile of the active site. Positions 272–276 (ARITR) are RNA binding; important for wobble base 34 recognition. The Zn(2+) site is built by Cys305, Cys307, Cys310, and His336.

The protein belongs to the queuine tRNA-ribosyltransferase family. As to quaternary structure, homodimer. Within each dimer, one monomer is responsible for RNA recognition and catalysis, while the other monomer binds to the replacement base PreQ1. Zn(2+) serves as cofactor.

The enzyme catalyses 7-aminomethyl-7-carbaguanine + guanosine(34) in tRNA = 7-aminomethyl-7-carbaguanosine(34) in tRNA + guanine. It functions in the pathway tRNA modification; tRNA-queuosine biosynthesis. Functionally, catalyzes the base-exchange of a guanine (G) residue with the queuine precursor 7-aminomethyl-7-deazaguanine (PreQ1) at position 34 (anticodon wobble position) in tRNAs with GU(N) anticodons (tRNA-Asp, -Asn, -His and -Tyr). Catalysis occurs through a double-displacement mechanism. The nucleophile active site attacks the C1' of nucleotide 34 to detach the guanine base from the RNA, forming a covalent enzyme-RNA intermediate. The proton acceptor active site deprotonates the incoming PreQ1, allowing a nucleophilic attack on the C1' of the ribose to form the product. After dissociation, two additional enzymatic reactions on the tRNA convert PreQ1 to queuine (Q), resulting in the hypermodified nucleoside queuosine (7-(((4,5-cis-dihydroxy-2-cyclopenten-1-yl)amino)methyl)-7-deazaguanosine). This Borreliella burgdorferi (strain ATCC 35210 / DSM 4680 / CIP 102532 / B31) (Borrelia burgdorferi) protein is Queuine tRNA-ribosyltransferase.